The primary structure comprises 794 residues: Striatin-3 (794 aa).

Position 1 is an N-acetylmethionine (methionine 1). Residues 1 to 12 are compositionally biased toward gly residues; the sequence is MDELAGGGGGQG. The disordered stretch occupies residues 1 to 59; the sequence is MDELAGGGGGQGMAVPPRPQQGPGGNLSLPPGANGAPGGGGPPAAETAGPPAGPELSRP. Residues 70 to 78 are caveolin-binding; sequence YIQHEWARF. The stretch at 76-135 forms a coiled coil; it reads ARFEMERAHWEVERAELQARIAFLQGERKGQENLKKDLVRRIKMLEYALKQERAKYHKLK. At threonine 149 the chain carries Phosphothreonine. A calmodulin-binding region spans residues 164–181; sequence QNSQLTWKQGRQLLRQYL. Phosphoserine is present on residues serine 200, serine 212, serine 227, serine 255, and serine 332. A disordered region spans residues 309-339; that stretch reads EDGEGAGEARSSGDGTEWDKDDLSPTAEVWD. 6 WD repeats span residues 475 to 514, 528 to 567, 581 to 620, 676 to 715, 718 to 757, and 764 to 794; these read SHFD…PAKK, AHIG…VDPY, AHTD…PCIC, QSSN…MIHS, AHLD…CVQE, and KLDE…KVFV.

It belongs to the WD repeat striatin family. Tetramerizes. Part of the core of STRIPAK complexes composed of PP2A catalytic and scaffolding subunits, the striatins (PP2A regulatory subunits), the striatin-associated proteins MOB4, STRIP1 and STRIP2, PDCD10 and members of the STE20 kinases, such as STK24 and STK26. The STRIPAK complex can be extended by adapter proteins such as SLMAP:SIKE1 or CTTNBP2NL. Interacts with CDC42BPB.

It is found in the cytoplasm. The protein localises to the membrane. In terms of biological role, calmodulin-binding scaffolding protein which is the center of the striatin-interacting phosphatase and kinase (STRIPAK) complexes. STRIPAK complexes have critical roles in protein (de)phosphorylation and are regulators of multiple signaling pathways including Hippo, MAPK, nuclear receptor and cytoskeleton remodeling. Different types of STRIPAK complexes are involved in a variety of biological processes such as cell growth, differentiation, apoptosis, metabolism and immune regulation. The sequence is that of Striatin-3 (Strn3) from Rattus norvegicus (Rat).